A 102-amino-acid polypeptide reads, in one-letter code: Putative lipid-transfer protein DIR1 (102 aa).

The first 25 residues, 1 to 25, serve as a signal peptide directing secretion; that stretch reads MASKKAAMVMMAMIVIMAMLVDTSV. 4 disulfide bridges follow: Cys-30-Cys-67, Cys-40-Cys-56, Cys-57-Cys-94, and Cys-69-Cys-102. An a 1-acyl-sn-glycero-3-phosphocholine-binding site is contributed by Gln-34. Glu-36 contacts Zn(2+). Asn-38 is an a 1-acyl-sn-glycero-3-phosphocholine binding site. Zn(2+) is bound at residue His-62.

This sequence belongs to the A9/FIL1 family. In terms of assembly, self-interacts and binds to AZI1. Does not interact with PDLP1. The cofactor is Zn(2+).

It is found in the secreted. The protein localises to the extracellular space. Its subcellular location is the apoplast. It localises to the endoplasmic reticulum. The protein resides in the cell junction. It is found in the plasmodesma. In terms of biological role, putative lipid transfer protein required for systemic acquired resistance (SAR) long distance signaling. May interact with a lipid-derived molecule to promote long distance signaling associated with SAR. Together with AZI1, required for glycerol-3-phosphate- (G3P) and azelaic acid- (AA) induced systemic acquired resistance (SAR). Component of plant systemic immunity involved in priming defenses in a AA-dependent manner, by modulating production and/or translocation of a mobile signal(s) during SAR. Is able to bind with high affinity monoacylated phospholipids, mainly lysophosphatidylcholines. This chain is Putative lipid-transfer protein DIR1 (DIR1), found in Arabidopsis thaliana (Mouse-ear cress).